A 226-amino-acid polypeptide reads, in one-letter code: MSSQTPVVTVDGPSGAGKGTLCMLLSKKLGFQLLDSGAIYRVLALAAIHHGVDTESEDALVPLATHLDVQFVAEGDLVKVILEGEDVSKELRKEETGMAASKVAALPRVREALLRRQRAFEAAPGLVADGRDMGTVVFPNAKAKIFLDASAEERAHRRLKQLQDKGLDVRFDDLLSEIQERDDRDRNRPVAPLCPAEDALVLDSTSMSIDEVVEKALQYIESKLAE.

Position 12–20 (Gly-12–Thr-20) interacts with ATP.

This sequence belongs to the cytidylate kinase family. Type 1 subfamily.

It is found in the cytoplasm. It carries out the reaction CMP + ATP = CDP + ADP. It catalyses the reaction dCMP + ATP = dCDP + ADP. This chain is Cytidylate kinase, found in Vibrio vulnificus (strain YJ016).